The following is a 443-amino-acid chain: Probable ribonuclease FAU-1 (443 aa).

This sequence belongs to the FAU-1 family.

Functionally, probable RNase involved in rRNA stability through maturation and/or degradation of precursor rRNAs. Binds to RNA in loop regions with AU-rich sequences. The protein is Probable ribonuclease FAU-1 of Pyrobaculum aerophilum (strain ATCC 51768 / DSM 7523 / JCM 9630 / CIP 104966 / NBRC 100827 / IM2).